Reading from the N-terminus, the 508-residue chain is Photosystem II CP47 reaction center protein (508 aa).

Helical transmembrane passes span 21 to 36, 101 to 115, 140 to 156, 203 to 218, 237 to 252, and 457 to 472; these read SVHI…WAGS, IVFS…IWHW, GIHL…FGAF, IAAG…FHLS, VLSS…AFVV, and SFAL…HGAR.

Belongs to the PsbB/PsbC family. PsbB subfamily. PSII is composed of 1 copy each of membrane proteins PsbA, PsbB, PsbC, PsbD, PsbE, PsbF, PsbH, PsbI, PsbJ, PsbK, PsbL, PsbM, PsbT, PsbX, PsbY, PsbZ, Psb30/Ycf12, at least 3 peripheral proteins of the oxygen-evolving complex and a large number of cofactors. It forms dimeric complexes. It depends on Binds multiple chlorophylls. PSII binds additional chlorophylls, carotenoids and specific lipids. as a cofactor.

The protein resides in the plastid. The protein localises to the chloroplast thylakoid membrane. One of the components of the core complex of photosystem II (PSII). It binds chlorophyll and helps catalyze the primary light-induced photochemical processes of PSII. PSII is a light-driven water:plastoquinone oxidoreductase, using light energy to abstract electrons from H(2)O, generating O(2) and a proton gradient subsequently used for ATP formation. The sequence is that of Photosystem II CP47 reaction center protein from Platanus occidentalis (Sycamore).